The primary structure comprises 338 residues: Tryptophan--tRNA ligase (338 aa).

ATP is bound by residues 11–13 (QPS) and 19–20 (GN). The short motif at 12 to 20 (PSGELSIGN) is the 'HIGH' region element. Position 135 (Asp-135) interacts with L-tryptophan. Residues 147 to 149 (GSD), Val-189, and 198 to 202 (KMSKS) each bind ATP. The short motif at 198-202 (KMSKS) is the 'KMSKS' region element.

It belongs to the class-I aminoacyl-tRNA synthetase family. As to quaternary structure, homodimer.

It localises to the cytoplasm. It carries out the reaction tRNA(Trp) + L-tryptophan + ATP = L-tryptophyl-tRNA(Trp) + AMP + diphosphate + H(+). Functionally, catalyzes the attachment of tryptophan to tRNA(Trp). The chain is Tryptophan--tRNA ligase from Vibrio cholerae serotype O1 (strain ATCC 39315 / El Tor Inaba N16961).